Consider the following 820-residue polypeptide: Sucrose synthase 2 (820 aa).

The tract at residues 276–753 (MVFNVVILSP…GLKRIYEKYT (478 aa)) is GT-B glycosyltransferase.

It belongs to the glycosyltransferase 1 family. Plant sucrose synthase subfamily.

The catalysed reaction is an NDP-alpha-D-glucose + D-fructose = a ribonucleoside 5'-diphosphate + sucrose + H(+). Functionally, sucrose-cleaving enzyme that provides UDP-glucose and fructose for various metabolic pathways. The chain is Sucrose synthase 2 from Tulipa gesneriana (Garden tulip).